A 488-amino-acid polypeptide reads, in one-letter code: Coiled-coil domain-containing protein 77 (488 aa).

Residues 21-48 (GVAVSGPTKRRGMADSLESTPLPSPEDR) form a disordered region. Position 36 is a phosphoserine (Ser-36). Lys-51 is covalently cross-linked (Glycyl lysine isopeptide (Lys-Gly) (interchain with G-Cter in SUMO2)). 2 coiled-coil regions span residues 55–118 (SKEL…QVCL) and 208–488 (KESS…LRLC). The segment at 192 to 213 (FKADPKISKRRPSRERKESSEH) is disordered.

The polypeptide is Coiled-coil domain-containing protein 77 (CCDC77) (Homo sapiens (Human)).